The sequence spans 416 residues: Zinc finger protein 92 homolog (416 aa).

A KRAB domain is found at 14–85 (VSFEDVSVYF…DIPRTWATAG (72 aa)). Residues 86 to 125 (LHIGDRTQSKTSTSTQKHSGRQLPGADPQGGKEGQAARSS) are disordered. 8 consecutive C2H2-type zinc fingers follow at residues 152-174 (YLCQ…RIIH), 180-202 (YACP…QRIH), 208-230 (YACP…QVIH), 236-258 (FACG…ARVH), 264-286 (YACP…QRTH), 292-314 (YACG…QRSH), 320-342 (FACR…RRVH), and 348-370 (YECS…QAVH). Residues 368 to 416 (AVHGARRPAKAETARRLAGPGSTGPGSAVAATSPPRPSTAARPSRPSRR) are disordered. The segment covering 394-416 (SAVAATSPPRPSTAARPSRPSRR) has biased composition (low complexity).

The protein belongs to the krueppel C2H2-type zinc-finger protein family.

The protein localises to the nucleus. KRAB domain-containing zinc-finger protein that represses B1/Alu SINE transposable elements and modulates the transcription of nearby genes in a tissue-specific manner. It regulates glucose homeostasis and lipid metabolism by modulating the expression of the endocrine cell-defining transcription factor, MAFB, in pancreatic islets and, the fat metabolism regulator, ACACB, in adipose tissue and muscle. This is Zinc finger protein 92 homolog (ZFP92) from Homo sapiens (Human).